Here is a 62-residue protein sequence, read N- to C-terminus: Large ribosomal subunit protein bL35 (62 aa).

A compositionally biased stretch (basic residues) spans 1 to 26 (MPKMKTKSGLKKRIKITATGKVKRGN). A disordered region spans residues 1–62 (MPKMKTKSGL…SDFKRYKELI (62 aa)). Positions 53–62 (SDFKRYKELI) are enriched in basic and acidic residues.

The protein belongs to the bacterial ribosomal protein bL35 family.

In Metamycoplasma arthritidis (strain 158L3-1) (Mycoplasma arthritidis), this protein is Large ribosomal subunit protein bL35.